The sequence spans 264 residues: Virulence plasmid protein pGP3-D (264 aa).

This chain is Virulence plasmid protein pGP3-D, found in Chlamydia trachomatis serovar L2 (strain ATCC VR-902B / DSM 19102 / 434/Bu).